Here is a 281-residue protein sequence, read N- to C-terminus: 3-methyl-2-oxobutanoate hydroxymethyltransferase (281 aa).

Residues Asp-49 and Asp-88 each coordinate Mg(2+). 3-methyl-2-oxobutanoate contacts are provided by residues Asp-49–Ser-50, Asp-88, and Lys-118. Glu-120 serves as a coordination point for Mg(2+). Glu-186 serves as the catalytic Proton acceptor.

This sequence belongs to the PanB family. Homodecamer; pentamer of dimers. The cofactor is Mg(2+).

It is found in the cytoplasm. The catalysed reaction is 3-methyl-2-oxobutanoate + (6R)-5,10-methylene-5,6,7,8-tetrahydrofolate + H2O = 2-dehydropantoate + (6S)-5,6,7,8-tetrahydrofolate. The protein operates within cofactor biosynthesis; (R)-pantothenate biosynthesis; (R)-pantoate from 3-methyl-2-oxobutanoate: step 1/2. Functionally, catalyzes the reversible reaction in which hydroxymethyl group from 5,10-methylenetetrahydrofolate is transferred onto alpha-ketoisovalerate to form ketopantoate. This chain is 3-methyl-2-oxobutanoate hydroxymethyltransferase, found in Chelativorans sp. (strain BNC1).